The primary structure comprises 624 residues: Laccase-1 (624 aa).

The first 20 residues, 1 to 20 (MRGLAKLFFLSCSFVSLVSS), serve as a signal peptide directing secretion. Plastocyanin-like domains lie at 72-183 (FASP…HSPN) and 195-343 (DRIV…CMFG). Cu cation is bound by residues H117 and H119. A disulfide bond links C138 and C578. A glycan (N-linked (GlcNAc...) asparagine) is linked at N149. Cu cation contacts are provided by H162 and H164. 2 N-linked (GlcNAc...) asparagine glycosylation sites follow: N242 and N430. The Plastocyanin-like 3 domain maps to 469-562 (IIINNLDTVI…GKLAVIVVQP (94 aa)). Residues H480, H483, and H485 each coordinate Cu cation. An N-linked (GlcNAc...) asparagine glycan is attached at N503. Cu cation is bound by residues H543, C544, H545, and H549. Positions 579-604 (ANTDPNAFGPAKRSSSPSIQSSKTSS) are disordered. A compositionally biased stretch (low complexity) spans 592–604 (SSSPSIQSSKTSS).

Belongs to the multicopper oxidase family. Requires Cu cation as cofactor.

The protein resides in the secreted. Its subcellular location is the cell wall. It catalyses the reaction 4 hydroquinone + O2 = 4 benzosemiquinone + 2 H2O. Functionally, laccase that catalyzes the oxidation of certain aromatic compounds, including L-dopa, to quinones, which then polymerize to melanin. Able to oxidize a wide variety of aromatic diphenol and diamino groups in the ortho, meta, and para positions but not monophenolic groups such as in phenol, tyramine, or tyrosine. Plays an important role in virulence. Plays a role in dissemination to extrapulmonary sites but is not involved in pulmonary growth or in elicitation of cellular immune responses in the lung. The polypeptide is Laccase-1 (Cryptococcus neoformans var. neoformans serotype D (strain B-3501A) (Filobasidiella neoformans)).